We begin with the raw amino-acid sequence, 126 residues long: Holo-[acyl-carrier-protein] synthase (126 aa).

Positions 8 and 57 each coordinate Mg(2+).

Belongs to the P-Pant transferase superfamily. AcpS family. The cofactor is Mg(2+).

The protein resides in the cytoplasm. It carries out the reaction apo-[ACP] + CoA = holo-[ACP] + adenosine 3',5'-bisphosphate + H(+). Transfers the 4'-phosphopantetheine moiety from coenzyme A to a Ser of acyl-carrier-protein. The polypeptide is Holo-[acyl-carrier-protein] synthase (Leptospira interrogans serogroup Icterohaemorrhagiae serovar copenhageni (strain Fiocruz L1-130)).